The sequence spans 668 residues: tRNA 5-methylaminomethyl-2-thiouridine biosynthesis bifunctional protein MnmC (668 aa).

The interval 1-245 (MKHYSIQPAN…KREMLCGVME (245 aa)) is tRNA (mnm(5)s(2)U34)-methyltransferase. Positions 270 to 668 (IGGGIASALL…LLKGKAVKAG (399 aa)) are FAD-dependent cmnm(5)s(2)U34 oxidoreductase.

The protein in the N-terminal section; belongs to the methyltransferase superfamily. tRNA (mnm(5)s(2)U34)-methyltransferase family. It in the C-terminal section; belongs to the DAO family. The cofactor is FAD.

It is found in the cytoplasm. The enzyme catalyses 5-aminomethyl-2-thiouridine(34) in tRNA + S-adenosyl-L-methionine = 5-methylaminomethyl-2-thiouridine(34) in tRNA + S-adenosyl-L-homocysteine + H(+). Catalyzes the last two steps in the biosynthesis of 5-methylaminomethyl-2-thiouridine (mnm(5)s(2)U) at the wobble position (U34) in tRNA. Catalyzes the FAD-dependent demodification of cmnm(5)s(2)U34 to nm(5)s(2)U34, followed by the transfer of a methyl group from S-adenosyl-L-methionine to nm(5)s(2)U34, to form mnm(5)s(2)U34. The protein is tRNA 5-methylaminomethyl-2-thiouridine biosynthesis bifunctional protein MnmC of Escherichia coli O6:H1 (strain CFT073 / ATCC 700928 / UPEC).